We begin with the raw amino-acid sequence, 341 residues long: MSDSTHKIAVIGAGSWGTALAALLARHGHPTVLWGRDAAMVDTIDRTHENARYLPGIALPDSLRATTDLQAAVADAAWILVVVPSHAFTETIRLIAPLRPACPGVAWATKGFEPGSGRFLHEVARDILGPSVPLAVVTGPSFAKEVTLGLPTAITVHGDDATFAQAVADAMHGPTFRAYTGDDMVGAELGGAMKNVLAVATGVADGMQLGLNARAGLITRGLNEMLRLAAAIGARPETLMGLAGLGDLVLTCTGDLSRNRRLGLALGRGQSLNDAIRQIGQVVESVQMADEVMRQAEHHGIELPISNAVRAVLHGEITPEAGLKELLARERKPEYPQTLFT.

Serine 15, tryptophan 16, arginine 36, and lysine 110 together coordinate NADPH. 3 residues coordinate sn-glycerol 3-phosphate: lysine 110, glycine 139, and serine 141. Alanine 143 contributes to the NADPH binding site. Sn-glycerol 3-phosphate contacts are provided by lysine 194, aspartate 247, serine 257, arginine 258, and asparagine 259. Catalysis depends on lysine 194, which acts as the Proton acceptor. Arginine 258 is an NADPH binding site. Valine 282 and glutamate 284 together coordinate NADPH.

The protein belongs to the NAD-dependent glycerol-3-phosphate dehydrogenase family.

The protein resides in the cytoplasm. The catalysed reaction is sn-glycerol 3-phosphate + NAD(+) = dihydroxyacetone phosphate + NADH + H(+). It catalyses the reaction sn-glycerol 3-phosphate + NADP(+) = dihydroxyacetone phosphate + NADPH + H(+). Its pathway is membrane lipid metabolism; glycerophospholipid metabolism. Catalyzes the reduction of the glycolytic intermediate dihydroxyacetone phosphate (DHAP) to sn-glycerol 3-phosphate (G3P), the key precursor for phospholipid synthesis. This Xanthomonas oryzae pv. oryzae (strain MAFF 311018) protein is Glycerol-3-phosphate dehydrogenase [NAD(P)+].